Reading from the N-terminus, the 886-residue chain is Cadherin-1 (886 aa).

Residues 1–23 form the signal peptide; that stretch reads MGARCRSFSALLLLLQVSSWLCQ. The propeptide occupies 24–158; that stretch reads QPESESDSCR…FHQGLRRQKR (135 aa). The Extracellular segment spans residues 24–713; the sequence is QPESESDSCR…SLEAGLQVPA (690 aa). 5 Cadherin domains span residues 159-266, 267-379, 380-490, 491-597, and 598-701; these read DWVI…RPEF, IQEV…APIF, NPST…APIF, VPAE…DNAP, and IPEP…NCMK. Asp261 contacts Ca(2+). O-linked (Man...) serine glycosylation is found at Ser284 and Ser289. Ca(2+) is bound at residue Asp292. 4 O-linked (Man...) threonine glycosylation sites follow: Thr362, Thr474, Thr476, and Thr513. Asn562 carries an N-linked (GlcNAc...) asparagine glycan. O-linked (Man...) threonine glycans are attached at residues Thr580, Thr582, and Thr584. Asn641 carries N-linked (GlcNAc...) asparagine glycosylation. The chain crosses the membrane as a helical span at residues 714–734; it reads ILGILGGILALLILILLLLLF. Residues 735–886 lie on the Cytoplasmic side of the membrane; the sequence is LRRRTVVKEP…ADMYGGGEED (152 aa). The disordered stretch occupies residues 751–771; the sequence is DTRDNVYYYDEEGGGEEDQDF. A phosphotyrosine; by SRC mark is found at Tyr757, Tyr758, and Tyr759. A compositionally biased stretch (acidic residues) spans 759-771; it reads YDEEGGGEEDQDF. Positions 762–773 are required for binding CTNND1 and PSEN1; the sequence is EGGGEEDQDFDL. Ser774, Ser797, Ser842, Ser844, and Ser850 each carry phosphoserine. The segment at 815 to 886 is required for binding alpha, beta and; sequence IDENLKAADS…ADMYGGGEED (72 aa).

As to quaternary structure, homodimer; disulfide-linked. Component of an E-cadherin/ catenin adhesion complex composed of at least E-cadherin/CDH1, beta-catenin/CTNNB1 or gamma-catenin/JUP, and potentially alpha-catenin/CTNNA1; the complex is located to adherens junctions. Found in a complex composed of CDH1, RAP1A and PKP3; PKP3 acts as a scaffold protein within the complex, the complex is required for CDH1 localization to mature desmosome cell junctions. Interacts with the TRPV4 and CTNNB1 complex. Interacts with CTNND1. The stable association of CTNNA1 is controversial as CTNNA1 was shown not to bind to F-actin when assembled in the complex. Alternatively, the CTNNA1-containing complex may be linked to F-actin by other proteins such as LIMA1. Interaction with PSEN1, cleaves CDH1 resulting in the disassociation of cadherin-based adherens junctions (CAJs). Interacts with AJAP1 and DLGAP5. Interacts with TBC1D2. Interacts with LIMA1. Interacts with CAV1. Interacts with PIP5K1C. Interacts with DDR1; this stabilizes CDH1 at the cell surface and inhibits its internalization. Interacts with RAPGEF2. Interacts with RAB8B. Interacts with KLRG1. Forms a ternary complex composed of ADAM10, CADH1 and EPHA4; within the complex, CADH1 is cleaved by ADAM10 which disrupts adherens junctions. Interacts with SPEF1. Interacts with CTNNB1 and PKP2. Interacts with AMOTL2; the interaction may facilitate binding of radial actin fibers to cell junction complexes. Interacts with DSG3; the interaction is required for CDH1 localization to developing adherens junctions. In terms of processing, during apoptosis or with calcium influx, cleaved by a membrane-bound metalloproteinase (ADAM10), PS1/gamma-secretase and caspase-3. Processing by the metalloproteinase, induced by calcium influx, causes disruption of cell-cell adhesion and the subsequent release of beta-catenin into the cytoplasm. The residual membrane-tethered cleavage product is rapidly degraded via an intracellular proteolytic pathway. Cleavage by caspase-3 releases the cytoplasmic tail resulting in disintegration of the actin microfilament system. The gamma-secretase-mediated cleavage promotes disassembly of adherens junctions. During development of the cochlear organ of Corti, cleavage by ADAM10 at adherens junctions promotes pillar cell separation. N-glycosylation at Asn-641 is essential for expression, folding and trafficking. Addition of bisecting N-acetylglucosamine by MGAT3 modulates its cell membrane location. Post-translationally, ubiquitinated by a SCF complex containing SKP2, which requires prior phosphorylation by CK1/CSNK1A1. Ubiquitinated by CBLL1/HAKAI, requires prior phosphorylation at Tyr-758. In terms of processing, O-glycosylated. O-manosylated by TMTC1, TMTC2, TMTC3 or TMTC4. Ser-289 and Thr-513 are O-manosylated by TMTC2 or TMTC4 but not TMTC1 or TMTC3.

It localises to the cell junction. It is found in the adherens junction. The protein localises to the cell membrane. Its subcellular location is the endosome. The protein resides in the golgi apparatus. It localises to the trans-Golgi network. It is found in the cytoplasm. The protein localises to the desmosome. Cadherins are calcium-dependent cell adhesion proteins. They preferentially interact with themselves in a homophilic manner in connecting cells; cadherins may thus contribute to the sorting of heterogeneous cell types. CDH1 is involved in mechanisms regulating cell-cell adhesions, mobility and proliferation of epithelial cells. Promotes organization of radial actin fiber structure and cellular response to contractile forces, via its interaction with AMOTL2 which facilitates anchoring of radial actin fibers to CDH1 junction complexes at the cell membrane. Plays a role in the early stages of desmosome cell-cell junction formation via facilitating the recruitment of DSG2 and DSP to desmosome plaques. Has a potent invasive suppressor role. It is a ligand for integrin alpha-E/beta-7. In terms of biological role, E-Cad/CTF2 promotes non-amyloidogenic degradation of Abeta precursors. Has a strong inhibitory effect on APP C99 and C83 production. The protein is Cadherin-1 (Cdh1) of Rattus norvegicus (Rat).